Reading from the N-terminus, the 540-residue chain is DNA topoisomerase 1 (540 aa).

One can recognise a Toprim domain in the interval 1 to 110 (MELFIVESPT…NIKRAVFYEI (110 aa)). 2 residues coordinate Mg(2+): Glu7 and Asp79. The 411-residue stretch at 126–536 (NMNLVYAQFA…FMEKIFGKEL (411 aa)) folds into the Topo IA-type catalytic domain. Positions 161–166 (SAGRVQ) are interaction with DNA. Residue Tyr281 is the O-(5'-phospho-DNA)-tyrosine intermediate of the active site.

The protein belongs to the type IA topoisomerase family. As to quaternary structure, monomer. Mg(2+) serves as cofactor.

It catalyses the reaction ATP-independent breakage of single-stranded DNA, followed by passage and rejoining.. Releases the supercoiling and torsional tension of DNA, which is introduced during the DNA replication and transcription, by transiently cleaving and rejoining one strand of the DNA duplex. Introduces a single-strand break via transesterification at a target site in duplex DNA. The scissile phosphodiester is attacked by the catalytic tyrosine of the enzyme, resulting in the formation of a DNA-(5'-phosphotyrosyl)-enzyme intermediate and the expulsion of a 3'-OH DNA strand. The free DNA strand then undergoes passage around the unbroken strand, thus removing DNA supercoils. Finally, in the religation step, the DNA 3'-OH attacks the covalent intermediate to expel the active-site tyrosine and restore the DNA phosphodiester backbone. The sequence is that of DNA topoisomerase 1 from Aquifex aeolicus (strain VF5).